Here is a 319-residue protein sequence, read N- to C-terminus: Ribonucleoside-diphosphate reductase small chain (319 aa).

Fe cation contacts are provided by D70, E101, and H104. Y108 is an active-site residue. Fe cation is bound by residues E163, E197, and H200. Positions 313 to 319 are interaction with R1; it reads FSLDVDF.

The protein belongs to the ribonucleoside diphosphate reductase small chain family. As to quaternary structure, interacts with RNR1/OPG080 subunit. Can interact with host RNR1 supunit. It depends on Fe cation as a cofactor.

It catalyses the reaction a 2'-deoxyribonucleoside 5'-diphosphate + [thioredoxin]-disulfide + H2O = a ribonucleoside 5'-diphosphate + [thioredoxin]-dithiol. Functionally, ribonucleoside-diphosphate reductase holoenzyme provides the precursors necessary for viral DNA synthesis. Allows virus growth in non-dividing cells. Catalyzes the biosynthesis of deoxyribonucleotides from the corresponding ribonucleotides. This is Ribonucleoside-diphosphate reductase small chain (OPG048) from Homo sapiens (Human).